Reading from the N-terminus, the 330-residue chain is Laforin (330 aa).

Residues 1–123 enclose the CBM20 domain; sequence MLFRFGVVVP…DNLVDGVYCL (123 aa). Ser-25 carries the post-translational modification Phosphoserine; by AMPK. Substrate contacts are provided by residues Trp-32, Lys-86, 102–106, Asp-196, Asp-234, and Arg-240; that span reads GPHHD. The Tyrosine-protein phosphatase domain maps to 155-322; it reads HYSRILPNIW…QQDFSQKFGK (168 aa). The active-site Phosphocysteine intermediate is the Cys-265. The Glucan phosphatase signature motif CXAGXGR motif lies at 265 to 271; that stretch reads CNAGVGR. Substrate contacts are provided by residues 266–271 and Tyr-303; that span reads NAGVGR.

The protein belongs to the protein-tyrosine phosphatase family. Homodimer. Interacts with PPP1R3B, PPP1R3C, HIRIP5, and EPM2AIP1. Binds glycogen and Lafora bodies. Interacts with NHLRC1/malin (via the NHL repeats). Forms a complex with NHLRC1/malin and HSP70. Interacts with PPP1R3D; in the presence of NHLC1/malin the interaction leads to ubiquitination and autophagic degradation of PPP1R3D. Interacts (via the phosphatase domain) with MAPT/Tau; the interaction dephosphorylates MAPT. Interacts with PRDM8. Polyubiquitinated by NHLRC1/malin. Post-translationally, phosphorylation on Ser-25 by AMPK affects the phosphatase activity of the enzyme and its ability to homodimerize and interact with NHLRC1, PPP1R3C or PRKAA2. As to expression, detected in skeletal muscle and in brain (at protein level). Widely expressed. Higher levels of expression are found in heart, brain, liver, skeletal muscle and kidney.

The protein resides in the cytoplasm. Its subcellular location is the endoplasmic reticulum membrane. The protein localises to the cell membrane. It catalyses the reaction O-phospho-L-tyrosyl-[protein] + H2O = L-tyrosyl-[protein] + phosphate. The enzyme catalyses O-phospho-L-seryl-[protein] + H2O = L-seryl-[protein] + phosphate. It carries out the reaction O-phospho-L-threonyl-[protein] + H2O = L-threonyl-[protein] + phosphate. Functionally, plays an important role in preventing glycogen hyperphosphorylation and the formation of insoluble aggregates, via its activity as glycogen phosphatase, and by promoting the ubiquitination of proteins involved in glycogen metabolism via its interaction with the E3 ubiquitin ligase NHLRC1/malin. Dephosphorylates phosphotyrosine and synthetic substrates, such as para-nitrophenylphosphate (pNPP), and has low activity with phosphoserine and phosphothreonine substrates (in vitro). Has also been shown to dephosphorylate MAPT. Shows strong phosphatase activity towards complex carbohydrates in vitro, avoiding glycogen hyperphosphorylation which is associated with reduced branching and formation of insoluble aggregates. Forms a complex with NHLRC1/malin and HSP70, which suppresses the cellular toxicity of misfolded proteins by promoting their degradation through the ubiquitin-proteasome system (UPS). Acts as a scaffold protein to facilitate PPP1R3C/PTG ubiquitination by NHLRC1/malin. Also promotes proteasome-independent protein degradation through the macroautophagy pathway. This Mus musculus (Mouse) protein is Laforin (Epm2a).